A 422-amino-acid chain; its full sequence is Isocitrate dehydrogenase [NADP] (422 aa).

Thr-94 provides a ligand contact to NADP(+). Residues Ser-103, Asn-105, Arg-109, Arg-119, and Arg-143 each contribute to the D-threo-isocitrate site. Asp-310 is a Mg(2+) binding site. NADP(+) is bound by residues 344-350, Asn-357, Tyr-396, and Arg-400; that span reads HGTAPKY.

It belongs to the isocitrate and isopropylmalate dehydrogenases family. As to quaternary structure, homodimer. It depends on Mg(2+) as a cofactor. Mn(2+) is required as a cofactor.

The catalysed reaction is D-threo-isocitrate + NADP(+) = 2-oxoglutarate + CO2 + NADPH. In terms of biological role, catalyzes the oxidative decarboxylation of isocitrate to 2-oxoglutarate and carbon dioxide with the concomitant reduction of NADP(+). This Staphylococcus aureus (strain COL) protein is Isocitrate dehydrogenase [NADP] (icd).